We begin with the raw amino-acid sequence, 283 residues long: MTVQTSKNPQVDIAEDNAFFPSEYSLSQYTSPVSDLDGVDYPKPYRGKHKILVIAADERYLPTDNGKLFSTGNHPIETLLPLYHLHAAGFEFEVATISGLMTKFEYWAMPHKDEKVMPFFEQHKSLFRNPKKLADVVASLNADSEYAAIFVPGGHGALIGLPESQDVAAALQWAIKNDRFVISLCHGPAAFLALRHSDNPLNGYSICAFPDAADKQTPDIGYMPGHLTWYFGEELKKMGMNIINDDITGRVHKDRKRLTGDSPFAANALGKLAAQEMLAAYAS.

The Zn(2+) site is built by His-86, Glu-91, and His-123. The active-site Nucleophile is the Cys-185.

This sequence belongs to the peptidase C56 family. HchA subfamily. In terms of assembly, homodimer.

The protein localises to the cytoplasm. It carries out the reaction N(omega)-(1-hydroxy-2-oxopropyl)-L-arginyl-[protein] + H2O = lactate + L-arginyl-[protein] + H(+). The catalysed reaction is N(6)-(1-hydroxy-2-oxopropyl)-L-lysyl-[protein] + H2O = lactate + L-lysyl-[protein] + H(+). It catalyses the reaction S-(1-hydroxy-2-oxopropyl)-L-cysteinyl-[protein] + H2O = lactate + L-cysteinyl-[protein] + H(+). The enzyme catalyses N(omega)-(1-hydroxy-2-oxoethyl)-L-arginyl-[protein] + H2O = L-arginyl-[protein] + glycolate + H(+). It carries out the reaction N(6)-(1-hydroxy-2-oxoethyl)-L-lysyl-[protein] + H2O = glycolate + L-lysyl-[protein] + H(+). The catalysed reaction is S-(1-hydroxy-2-oxoethyl)-L-cysteinyl-[protein] + H2O = glycolate + L-cysteinyl-[protein] + H(+). It catalyses the reaction N(2)-(1-hydroxy-2-oxopropyl)-dGTP + H2O = lactate + dGTP + H(+). The enzyme catalyses N(2)-(1-hydroxy-2-oxopropyl)-GTP + H2O = lactate + GTP + H(+). It carries out the reaction N(2)-(1-hydroxy-2-oxopropyl)-GDP + H2O = lactate + GDP + H(+). The catalysed reaction is N(2)-(1-hydroxy-2-oxopropyl)-GMP + H2O = lactate + GMP + H(+). It catalyses the reaction N(2)-(1-hydroxy-2-oxoethyl)-dGTP + H2O = dGTP + glycolate + H(+). The enzyme catalyses N(2)-(1-hydroxy-2-oxoethyl)-GTP + H2O = glycolate + GTP + H(+). It carries out the reaction N(2)-(1-hydroxy-2-oxoethyl)-GDP + H2O = glycolate + GDP + H(+). The catalysed reaction is N(2)-(1-hydroxy-2-oxoethyl)-GMP + H2O = glycolate + GMP + H(+). It catalyses the reaction an N(2)-(1-hydroxy-2-oxopropyl)-guanosine in RNA + H2O = a guanosine in RNA + lactate + H(+). The enzyme catalyses an N(2)-(1-hydroxy-2-oxopropyl)-2'-deoxyguanosine in DNA + H2O = a 2'-deoxyguanosine in DNA + lactate + H(+). It carries out the reaction an N(2)-(1-hydroxy-2-oxoethyl)-guanosine in RNA + H2O = a guanosine in RNA + glycolate + H(+). The catalysed reaction is an N(2)-(1-hydroxy-2-oxoethyl)-2'-deoxyguanosine in DNA + H2O = a 2'-deoxyguanosine in DNA + glycolate + H(+). Its function is as follows. Protein and nucleotide deglycase that catalyzes the deglycation of the Maillard adducts formed between amino groups of proteins or nucleotides and reactive carbonyl groups of glyoxals. Thus, functions as a protein deglycase that repairs methylglyoxal- and glyoxal-glycated proteins, and releases repaired proteins and lactate or glycolate, respectively. Deglycates cysteine, arginine and lysine residues in proteins, and thus reactivates these proteins by reversing glycation by glyoxals. Acts on early glycation intermediates (hemithioacetals and aminocarbinols), preventing the formation of Schiff bases and advanced glycation endproducts (AGE). Also functions as a nucleotide deglycase able to repair glycated guanine in the free nucleotide pool (GTP, GDP, GMP, dGTP) and in DNA and RNA. Is thus involved in a major nucleotide repair system named guanine glycation repair (GG repair), dedicated to reversing methylglyoxal and glyoxal damage via nucleotide sanitization and direct nucleic acid repair. Plays an important role in protecting cells from carbonyl stress. This is Protein/nucleic acid deglycase HchA from Shigella flexneri.